The following is a 362-amino-acid chain: Probable tocopherol O-methyltransferase, chloroplastic (362 aa).

A chloroplast-targeting transit peptide spans 1 to 55 (MAHAAAATGALAPLHPLLRCTSRHLCASASPRAGLCLHHHRRRRRSSRRTKLAVR). An SAM motif I region spans residues 141 to 150 (VVDVGCGIGG). Residues 204–212 (GQFDLVWSM) are SAM motif II. Positions 231–240 (VAAPGARIII) are SAM motif III.

It belongs to the class I-like SAM-binding methyltransferase superfamily. gTMT family.

The protein localises to the plastid. It localises to the chloroplast. The enzyme catalyses gamma-tocopherol + S-adenosyl-L-methionine = (+)-alpha-tocopherol + S-adenosyl-L-homocysteine + H(+). The catalysed reaction is delta-tocotrienol + S-adenosyl-L-methionine = beta-tocotrienol + S-adenosyl-L-homocysteine + H(+). It catalyses the reaction gamma-tocotrienol + S-adenosyl-L-methionine = alpha-tocotrienol + S-adenosyl-L-homocysteine + H(+). It carries out the reaction delta-tocopherol + S-adenosyl-L-methionine = beta-tocopherol + S-adenosyl-L-homocysteine + H(+). It participates in cofactor biosynthesis; tocopherol biosynthesis. Functionally, involved in the synthesis of tocopherol (vitamin E). Methylates gamma- and delta-tocopherol to form beta- and alpha-tocopherol, respectively. The sequence is that of Probable tocopherol O-methyltransferase, chloroplastic (VTE4) from Oryza sativa subsp. japonica (Rice).